Here is a 1160-residue protein sequence, read N- to C-terminus: MSASNEKWIDGLQFSSLFWPPPQDSQQKQAQILAYVEYFGQFTADSEQFPEDIAQLIQSCYPSKEKRLVDEVLATFVLHHPEHGHAVVHPILSRIIDGTLSYDRNGFPFMSFISLFSHTSEKEYSEQWALACGEILRVLTHYNRPIFKVDHQHSEAECSSTSDQASSCESMEKRANGSPRNEPDRKPLRPLSPWITDILLAAPLGIRSDYFRWCGGVMGKYAAGGELKPPTTAYSRGSGKHPQLMPSTPRWAVANGAGVILSVCDEEVARYETANLTAAAVPALLLPPPTTPLDEHLVAGLPPLEPYARLFHRYYAIATPSATQRLLFGLLEAPPSWAPDALDAAVQLVELLRAAEDYDSGMRLPKNWMHLHFLRAIGTAMSMRAGIAADTSAALLFRILSQPTLLFPPLRHAEGVELHHEPLGGYVSSYKRQLEVPASEATIDATAQGIASMLCAHGPDVEWRICTIWEAAYGLLPLSSSAVDLPEIVVAAPLQPPTLSWSLYLPLLKVFEYLPRGSPSEACLMRIFVATVEAILRRTFPSETSEQSRKPRSQSKNLAVAELRTMIHSLFVESCASMDLASRLLFVVLTVCVSHQALPGGSKRPTGSDNHSSEEVTNDSRLTNGRNRCKKRQGPVATFDSYVLAAVCALSCELQLFPFISKNGNHSNLKDSIKIVIPGKTTGISNELHNSISSAILHTRRILGILEALFSLKPSSVGTSWSYSSNEIVAAAMVAAHVSELFRRSRPCLNALSALKQCKWDAEISTRASSLYHLIDLHGKTVTSIVNKAEPLEAHLTLTPVKKDEPPIEEKNINSSDGGALEKKDASRSHRKNGFARPLLKCAEDVILNGDVASTSGKAIASLQVEASDLANFLTMDRNGGYRGSQTLLRSVLSEKQELCFSVVSLLWQKLIASPEMQMSAESTSAHQGWRKVVDALCDIVSASPTKASAAIVLQAEKDLQPWIARDDEQGQKMWRVNQRIVKLIAELMRNHDSPEALVILASASDLLLRATDGMLVDGEACTLPQLELLEVTARAVHLIVEWGDSGVSVADGLSNLLKCRLSTTIRCLSHPSAHVRALSMSVLRDILNSGQINSSKLIQGEHRNGIQSPTYQCLAASIINWQADVERCIEWEAHSRRATGLTLAFLTAAAKELGCPLTC.

Positions 158–169 (CSSTSDQASSCE) are enriched in polar residues. Disordered stretches follow at residues 158–188 (CSSTSDQASSCESMEKRANGSPRNEPDRKPL), 600–629 (GGSKRPTGSDNHSSEEVTNDSRLTNGRNRC), and 800–830 (PVKKDEPPIEEKNINSSDGGALEKKDASRSH). Residues 170-187 (SMEKRANGSPRNEPDRKP) are compositionally biased toward basic and acidic residues. Basic and acidic residues predominate over residues 801–812 (VKKDEPPIEEKN).

The protein belongs to the GIGANTEA family.

The protein localises to the nucleus. Involved in regulation of circadian rhythm, and in the control of the photoperiodic flowering. Acts as a suppressor of flowering under short-day (SD) and long-day (LD) conditions. Activates Hd1/CONSTANS gene. This is Protein GIGANTEA (GI) from Oryza sativa subsp. japonica (Rice).